Reading from the N-terminus, the 132-residue chain is U-scoloptoxin(05)-Er3a (132 aa).

Positions 1 to 19 (MRSWFVFVALLAVVFLPSS) are cleaved as a signal peptide.

The protein belongs to the scoloptoxin-05 family. Contains 5 disulfide bonds. As to expression, expressed by the venom gland.

It is found in the secreted. This chain is U-scoloptoxin(05)-Er3a, found in Ethmostigmus rubripes (Giant centipede).